Here is an 87-residue protein sequence, read N- to C-terminus: uncharacterized protein (87 aa).

The signal sequence occupies residues 1–25; that stretch reads MKIRKILLSSALSFGMLISAVPALA.

This is an uncharacterized protein from Bacillus subtilis (strain 168).